A 740-amino-acid polypeptide reads, in one-letter code: Eukaryotic translation initiation factor 3 subunit B (740 aa).

Polar residues predominate over residues 1 to 10 (MAPSFDTLSE). The tract at residues 1–20 (MAPSFDTLSEQDLHEEEEEE) is disordered. One can recognise an RRM domain in the interval 40–126 (TFVVIDGLPV…HTLLVNKLMD (87 aa)). WD repeat units follow at residues 193 to 230 (AHWT…KQKQ), 232 to 289 (PHPF…RSFV), 302 to 343 (EPKK…LLGK), 455 to 496 (SLKD…SFFA), 513 to 556 (IEKK…EKPE), and 571 to 609 (TEHY…HTFA). Positions 696–721 (AYGLPEEADDPKLAKDAAATTQEQGE) are disordered.

The protein belongs to the eIF-3 subunit B family. As to quaternary structure, component of the eukaryotic translation initiation factor 3 (eIF-3) complex.

It localises to the cytoplasm. In terms of biological role, RNA-binding component of the eukaryotic translation initiation factor 3 (eIF-3) complex, which is involved in protein synthesis of a specialized repertoire of mRNAs and, together with other initiation factors, stimulates binding of mRNA and methionyl-tRNAi to the 40S ribosome. The eIF-3 complex specifically targets and initiates translation of a subset of mRNAs involved in cell proliferation. This Aspergillus fumigatus (strain ATCC MYA-4609 / CBS 101355 / FGSC A1100 / Af293) (Neosartorya fumigata) protein is Eukaryotic translation initiation factor 3 subunit B (prt1).